The chain runs to 308 residues: Porphobilinogen deaminase (308 aa).

Cys241 carries the S-(dipyrrolylmethanemethyl)cysteine modification.

It belongs to the HMBS family. As to quaternary structure, monomer. Dipyrromethane is required as a cofactor.

The enzyme catalyses 4 porphobilinogen + H2O = hydroxymethylbilane + 4 NH4(+). It functions in the pathway porphyrin-containing compound metabolism; protoporphyrin-IX biosynthesis; coproporphyrinogen-III from 5-aminolevulinate: step 2/4. Its function is as follows. Tetrapolymerization of the monopyrrole PBG into the hydroxymethylbilane pre-uroporphyrinogen in several discrete steps. This Staphylococcus carnosus (strain TM300) protein is Porphobilinogen deaminase.